We begin with the raw amino-acid sequence, 444 residues long: Aflatoxin biosynthesis regulatory protein (444 aa).

The tract at residues 1–26 (MVDHISPRASPGPIRSSQTRRARKLR) is disordered. The zn(2)-C6 fungal-type DNA-binding region spans 29–56 (CTSCASSKVRCTKEKPACARCIERGLAC). Residues 64-167 (MGRNPRAPSP…QGLGGDLAGQ (104 aa)) form a disordered region. Positions 106–116 (TQAHTHAHSHP) are enriched in basic residues. Residues 120–130 (PQSHPQSNQPP) are compositionally biased toward low complexity. The span at 136–149 (PNGSSSVSAIFSHQ) shows a compositional bias: polar residues.

As to quaternary structure, interacts with its co-regulator aflS.

The protein resides in the nucleus. The protein localises to the endosome. Functionally, transcription factor involved in regulation of the aflatoxin biosynthesis gene cluster. Binds with its co-regulator aflS to AFLR1 elements (5'-TCGSWNNSCGR-3') present in the promoters of the aflatoxin cluster genes. The ratio of the expression data between aflS:aflR plays a crucial role in the regulation of aflatoxins production. A high ratio, produced at a range between 17 and 30 degrees Celsius, corresponds with the production profile of aflatoxin G1 biosynthesis. A low ratio, produced over 30 degrees Celsius, is related to aflatoxin B1 biosynthesis. The protein is Aflatoxin biosynthesis regulatory protein of Aspergillus parasiticus (strain ATCC 56775 / NRRL 5862 / SRRC 143 / SU-1).